The chain runs to 88 residues: Small ribosomal subunit protein uS15 (88 aa).

Belongs to the universal ribosomal protein uS15 family. In terms of assembly, part of the 30S ribosomal subunit. Forms a bridge to the 50S subunit in the 70S ribosome, contacting the 23S rRNA.

One of the primary rRNA binding proteins, it binds directly to 16S rRNA where it helps nucleate assembly of the platform of the 30S subunit by binding and bridging several RNA helices of the 16S rRNA. In terms of biological role, forms an intersubunit bridge (bridge B4) with the 23S rRNA of the 50S subunit in the ribosome. The sequence is that of Small ribosomal subunit protein uS15 from Acidovorax sp. (strain JS42).